We begin with the raw amino-acid sequence, 177 residues long: Crossover junction endodeoxyribonuclease RuvC (177 aa).

Active-site residues include Asp8, Glu72, and Asp144. The Mg(2+) site is built by Asp8, Glu72, and Asp144.

Belongs to the RuvC family. Homodimer which binds Holliday junction (HJ) DNA. The HJ becomes 2-fold symmetrical on binding to RuvC with unstacked arms; it has a different conformation from HJ DNA in complex with RuvA. In the full resolvosome a probable DNA-RuvA(4)-RuvB(12)-RuvC(2) complex forms which resolves the HJ. Mg(2+) serves as cofactor.

It is found in the cytoplasm. It carries out the reaction Endonucleolytic cleavage at a junction such as a reciprocal single-stranded crossover between two homologous DNA duplexes (Holliday junction).. The RuvA-RuvB-RuvC complex processes Holliday junction (HJ) DNA during genetic recombination and DNA repair. Endonuclease that resolves HJ intermediates. Cleaves cruciform DNA by making single-stranded nicks across the HJ at symmetrical positions within the homologous arms, yielding a 5'-phosphate and a 3'-hydroxyl group; requires a central core of homology in the junction. The consensus cleavage sequence is 5'-(A/T)TT(C/G)-3'. Cleavage occurs on the 3'-side of the TT dinucleotide at the point of strand exchange. HJ branch migration catalyzed by RuvA-RuvB allows RuvC to scan DNA until it finds its consensus sequence, where it cleaves and resolves the cruciform DNA. The polypeptide is Crossover junction endodeoxyribonuclease RuvC (Teredinibacter turnerae (strain ATCC 39867 / T7901)).